A 450-amino-acid chain; its full sequence is Glutamate--tRNA ligase 2 (450 aa).

The short motif at 10–20 (PSPTGRIHIGN) is the 'HIGH' region element. Residues 243–247 (GFSKR) carry the 'KMSKS' region motif. Lysine 246 serves as a coordination point for ATP.

Belongs to the class-I aminoacyl-tRNA synthetase family. Glutamate--tRNA ligase type 1 subfamily. As to quaternary structure, monomer.

The protein resides in the cytoplasm. It catalyses the reaction tRNA(Glu) + L-glutamate + ATP = L-glutamyl-tRNA(Glu) + AMP + diphosphate. In terms of biological role, catalyzes the attachment of glutamate to tRNA(Glu) in a two-step reaction: glutamate is first activated by ATP to form Glu-AMP and then transferred to the acceptor end of tRNA(Glu). The sequence is that of Glutamate--tRNA ligase 2 from Beijerinckia indica subsp. indica (strain ATCC 9039 / DSM 1715 / NCIMB 8712).